Reading from the N-terminus, the 951-residue chain is Glycine dehydrogenase (decarboxylating) 1 (951 aa).

Lysine 703 bears the N6-(pyridoxal phosphate)lysine mark.

Belongs to the GcvP family. The glycine cleavage system is composed of four proteins: P, T, L and H. It depends on pyridoxal 5'-phosphate as a cofactor.

The catalysed reaction is N(6)-[(R)-lipoyl]-L-lysyl-[glycine-cleavage complex H protein] + glycine + H(+) = N(6)-[(R)-S(8)-aminomethyldihydrolipoyl]-L-lysyl-[glycine-cleavage complex H protein] + CO2. In terms of biological role, the glycine cleavage system catalyzes the degradation of glycine. The P protein binds the alpha-amino group of glycine through its pyridoxal phosphate cofactor; CO(2) is released and the remaining methylamine moiety is then transferred to the lipoamide cofactor of the H protein. The sequence is that of Glycine dehydrogenase (decarboxylating) 1 (gcvP1) from Pseudomonas putida (strain ATCC 47054 / DSM 6125 / CFBP 8728 / NCIMB 11950 / KT2440).